We begin with the raw amino-acid sequence, 162 residues long: NADH-quinone oxidoreductase subunit I (162 aa).

2 consecutive 4Fe-4S ferredoxin-type domains span residues 53 to 83 (LRRY…IEAE) and 93 to 122 (TRYD…EGPN). Residues cysteine 63, cysteine 66, cysteine 69, cysteine 73, cysteine 102, cysteine 105, cysteine 108, and cysteine 112 each contribute to the [4Fe-4S] cluster site.

It belongs to the complex I 23 kDa subunit family. NDH-1 is composed of 14 different subunits. Subunits NuoA, H, J, K, L, M, N constitute the membrane sector of the complex. The cofactor is [4Fe-4S] cluster.

The protein localises to the cell inner membrane. The catalysed reaction is a quinone + NADH + 5 H(+)(in) = a quinol + NAD(+) + 4 H(+)(out). NDH-1 shuttles electrons from NADH, via FMN and iron-sulfur (Fe-S) centers, to quinones in the respiratory chain. The immediate electron acceptor for the enzyme in this species is believed to be ubiquinone. Couples the redox reaction to proton translocation (for every two electrons transferred, four hydrogen ions are translocated across the cytoplasmic membrane), and thus conserves the redox energy in a proton gradient. In Granulibacter bethesdensis (strain ATCC BAA-1260 / CGDNIH1), this protein is NADH-quinone oxidoreductase subunit I.